The chain runs to 180 residues: GTP cyclohydrolase 1 (180 aa).

Residues Cys-71, His-74, and Cys-142 each coordinate Zn(2+).

It belongs to the GTP cyclohydrolase I family. In terms of assembly, toroid-shaped homodecamer, composed of two pentamers of five dimers.

The catalysed reaction is GTP + H2O = 7,8-dihydroneopterin 3'-triphosphate + formate + H(+). Its pathway is cofactor biosynthesis; 7,8-dihydroneopterin triphosphate biosynthesis; 7,8-dihydroneopterin triphosphate from GTP: step 1/1. The chain is GTP cyclohydrolase 1 from Helicobacter acinonychis (strain Sheeba).